The following is a 116-amino-acid chain: MRKVIHIGLPKLSEEELIEIGDIAQRVIIDYIFEHLAKSEVRDMEVTARINQGETLDLELEVYVEVPIFVRVDVESLIDEAIDKAYEVVERHLRKLAKGKGNEGREEAEEASGKSK.

The tract at residues 97–116 (AKGKGNEGREEAEEASGKSK) is disordered. The segment covering 100-116 (KGNEGREEAEEASGKSK) has biased composition (basic and acidic residues).

The protein belongs to the UPF0440 family.

This is an uncharacterized protein from Pyrococcus horikoshii (strain ATCC 700860 / DSM 12428 / JCM 9974 / NBRC 100139 / OT-3).